A 935-amino-acid polypeptide reads, in one-letter code: Phosphoenolpyruvate carboxylase (935 aa).

Active-site residues include His-161 and Lys-593.

This sequence belongs to the PEPCase type 1 family. It depends on Mg(2+) as a cofactor.

The enzyme catalyses oxaloacetate + phosphate = phosphoenolpyruvate + hydrogencarbonate. Its function is as follows. Forms oxaloacetate, a four-carbon dicarboxylic acid source for the tricarboxylic acid cycle. The protein is Phosphoenolpyruvate carboxylase of Mycobacterium avium (strain 104).